Reading from the N-terminus, the 142-residue chain is Transcriptional regulator MraZ (142 aa).

SpoVT-AbrB domains lie at 5–47 (THTP…PTET) and 76–119 (ASDT…DATE).

The protein belongs to the MraZ family. In terms of assembly, forms oligomers.

It is found in the cytoplasm. It localises to the nucleoid. The chain is Transcriptional regulator MraZ from Cutibacterium acnes (strain DSM 16379 / KPA171202) (Propionibacterium acnes).